The chain runs to 131 residues: MRHYEIIFMVHPDQSEQVAGMIERYSALITGAEGQIHRLEDWGRRQLAYPINKLHKAHYVLLNVEAPQEVIDELETVFRFNDAVIRSMIMRVKHAVTEASPMVKAKDERRERREDFATETNEDSDAGDSEE.

Residues Ala-99–Glu-131 form a disordered region. The segment covering Lys-104–Phe-116 has biased composition (basic and acidic residues). Over residues Thr-120–Glu-131 the composition is skewed to acidic residues.

Belongs to the bacterial ribosomal protein bS6 family.

Its function is as follows. Binds together with bS18 to 16S ribosomal RNA. The chain is Small ribosomal subunit protein bS6 from Sodalis glossinidius (strain morsitans).